The chain runs to 1178 residues: Niemann-Pick type C1-related protein (1178 aa).

N-linked (GlcNAc...) asparagine glycosylation is present at asparagine 41. 2 helical membrane passes run 157–177 (PWLFIMVSLLATAGMSVGIFL) and 412–432 (VVEWLRLCAAVLVVFLYTSVV). An SSD domain is found at 414-570 (EWLRLCAAVL…LTFFLAGLSL (157 aa)). N-linked (GlcNAc...) asparagine glycosylation is present at asparagine 433. The next 4 helical transmembrane spans lie at 448-468 (GALASLLGYLGGAGLVYLCGV), 478-498 (PFLAIGIGVDDLFVIINAYSL), 516-536 (AGLSITITTLTNVITFIIGAL), and 545-565 (FCIITAGALTWGYVLCLTFFL). The N-linked (GlcNAc...) asparagine glycan is linked to asparagine 621. The helical transmembrane segment at 789–809 (ATVLVIFAAVTALAIYGATTL) threads the bilayer. Asparagine 917 and asparagine 943 each carry an N-linked (GlcNAc...) asparagine glycan. 5 helical membrane passes run 986-1006 (FTLTNLSIALVCILAISLLLI), 1013-1033 (IIVVLVVSLVDLWLFGFMALI), 1037-1057 (LSMISMVNLLISIGYSVDFTI), 1080-1100 (IVMGAPVTHGMLSTLLSILAL), and 1114-1134 (MMFMVIVFAYTAGMVLLPVVL).

Belongs to the patched family.

The protein localises to the inner membrane complex. It catalyses the reaction cholesterol(in) = cholesterol(out). Its function is as follows. Likely facilitates the efflux of cholesterol and gangliosides from membranes. Plays a role in the regulation of lipid homeostasis. The protein is Niemann-Pick type C1-related protein of Toxoplasma gondii (strain ATCC 50611 / Me49).